The following is a 209-amino-acid chain: Large ribosomal subunit protein uL3 (209 aa).

N5-methylglutamine is present on glutamine 150.

The protein belongs to the universal ribosomal protein uL3 family. Part of the 50S ribosomal subunit. Forms a cluster with proteins L14 and L19. In terms of processing, methylated by PrmB.

Its function is as follows. One of the primary rRNA binding proteins, it binds directly near the 3'-end of the 23S rRNA, where it nucleates assembly of the 50S subunit. The chain is Large ribosomal subunit protein uL3 from Klebsiella pneumoniae (strain 342).